A 288-amino-acid chain; its full sequence is Energy-coupling factor transporter ATP-binding protein EcfA2 (288 aa).

The ABC transporter domain maps to 3-245; that stretch reads IIVKNLTHIY…NASKLKDIGL (243 aa). 40–47 is a binding site for ATP; the sequence is GHTGSGKS.

This sequence belongs to the ABC transporter superfamily. Energy-coupling factor EcfA family. In terms of assembly, forms a stable energy-coupling factor (ECF) transporter complex composed of 2 membrane-embedded substrate-binding proteins (S component), 2 ATP-binding proteins (A component) and 2 transmembrane proteins (T component).

Its subcellular location is the cell membrane. In terms of biological role, ATP-binding (A) component of a common energy-coupling factor (ECF) ABC-transporter complex. Unlike classic ABC transporters this ECF transporter provides the energy necessary to transport a number of different substrates. The polypeptide is Energy-coupling factor transporter ATP-binding protein EcfA2 (Clostridioides difficile (strain 630) (Peptoclostridium difficile)).